Reading from the N-terminus, the 280-residue chain is Tumor necrosis factor ligand superfamily member 6 (280 aa).

Topologically, residues 1–80 (MQQPLNYPYP…KTRRDHNTGL (80 aa)) are cytoplasmic. The disordered stretch occupies residues 20 to 71 (SSPWGPPGSVLPCPSSVPGRPGQRRPPPPPPPTLPPPPPPPPLPPLPLPPLK). Residues 43–69 (RRPPPPPPPTLPPPPPPPPLPPLPLPP) are compositionally biased toward pro residues. A helical; Signal-anchor for type II membrane protein transmembrane segment spans residues 81-101 (CLLVMFFMVLVALVGLGLGMF). At 102-280 (QLFHLQKELA…SKTFFGLYKL (179 aa)) the chain is on the extracellular side. A THD domain is found at 144–280 (KVAHLTGKPN…SKTFFGLYKL (137 aa)). An N-linked (GlcNAc...) asparagine glycan is attached at N183. C201 and C232 form a disulfide bridge. 2 N-linked (GlcNAc...) asparagine glycosylation sites follow: N249 and N259.

It belongs to the tumor necrosis factor family. In terms of assembly, homotrimer. Interacts with ARHGAP9, BAIAP2L1, BTK, CACNB3, CACNB4, CRK, DLG2, DNMBP, DOCK4, EPS8L3, FGR, FYB1, FYN, HCK, ITK, ITSN2, KALRN, LYN, MACC1, MIA, MPP4, MYO15A, NCF1, NCK1, NCK2, NCKIPSD, OSTF1, PIK3R1, PSTPIP1, RIMBP3C, SAMSN1, SH3GL3, SH3PXD2B, SH3PXD2A, SH3RF2, SKAP2, SNX33, SNX9, SORBS3, SPTA1, SRC, SRGAP1, SRGAP2, SRGAP3, TEC, TJP3 and YES1. In terms of processing, the soluble form derives from the membrane form by proteolytic processing. The membrane-bound form undergoes two successive intramembrane proteolytic cleavages. The first one is processed by ADAM10 producing an N-terminal fragment, which lacks the receptor-binding extracellular domain. This ADAM10-processed FasL (FasL APL) remnant form is still membrane anchored and further processed by SPPL2A that liberates the FasL intracellular domain (FasL ICD). FasL shedding by ADAM10 is a prerequisite for subsequent intramembrane cleavage by SPPL2A in T-cells. Phosphorylated by FGR on tyrosine residues; this is required for ubiquitination and subsequent internalization. Post-translationally, N-glycosylated. Glycosylation enhances apoptotic activity. In terms of processing, monoubiquitinated.

Its subcellular location is the cell membrane. It is found in the cytoplasmic vesicle lumen. The protein resides in the lysosome lumen. The protein localises to the secreted. It localises to the nucleus. Its function is as follows. Cytokine that binds to TNFRSF6/FAS, a receptor that transduces the apoptotic signal into cells. Involved in cytotoxic T-cell-mediated apoptosis, natural killer cell-mediated apoptosis and in T-cell development. Initiates fratricidal/suicidal activation-induced cell death (AICD) in antigen-activated T-cells contributing to the termination of immune responses. TNFRSF6/FAS-mediated apoptosis has also a role in the induction of peripheral tolerance. Binds to TNFRSF6B/DcR3, a decoy receptor that blocks apoptosis. Induces FAS-mediated activation of NF-kappa-B, initiating non-apoptotic signaling pathways. Can induce apoptosis but does not appear to be essential for this process. Functionally, cytoplasmic form induces gene transcription inhibition. The sequence is that of Tumor necrosis factor ligand superfamily member 6 (FASLG) from Felis catus (Cat).